Here is an 835-residue protein sequence, read N- to C-terminus: Pre-mRNA-processing protein 40C (835 aa).

A compositionally biased stretch (polar residues) spans 1–20 (MEGENTTDPPYTTAASSGQS). Positions 1–22 (MEGENTTDPPYTTAASSGQSIF) are disordered. 2 WW domains span residues 243–276 (GNRL…KPPG) and 295–328 (SLPG…IPAE). The tract at residues 397 to 459 (SGMPVSSTIT…DSGPSKEECS (63 aa)) is disordered. Positions 400-428 (PVSSTITSEANSGKTTEVTPSGESGNSTG) are enriched in polar residues. 3 consecutive FF domains span residues 455-509 (KEEC…YVKT), 519-577 (RAAH…RVLS), and 590-643 (RAAA…YIAE). Disordered stretches follow at residues 649–677 (RGDD…RKER) and 714–738 (TESK…PADK). FF domains follow at residues 691-748 (RKEA…HVKS) and 750-815 (YERC…YVED).

The protein belongs to the PRPF40 family. Interacts (via the WW domains) with the phosphorylated C-terminal domain of NRPB1 (via CTD domain). As to expression, expressed in roots, shoots, rosette leaves, cauline leaves, stems and flowers.

Its subcellular location is the nucleus. Its function is as follows. Binds the phosphorylated C-terminal domain (CTD) of the largest subunit of RNA polymerase II and functions as a scaffold for RNA processing machineries. May be involved in pre-mRNA splicing. This is Pre-mRNA-processing protein 40C from Arabidopsis thaliana (Mouse-ear cress).